The chain runs to 1132 residues: Protein sel-1 homolog 3 (1132 aa).

Positions 1-24 (MQRRGAGLGWPRQQQQQPPPLAVG) are disordered. N-linked (GlcNAc...) asparagine glycans are attached at residues N201, N382, and N527. Sel1-like repeat units lie at residues 575 to 609 (YLAV…RLSS), 611 to 647 (NLGY…DQHT), 694 to 730 (RLAQ…PALI), 732 to 767 (DYAI…QAVN), 768 to 800 (GLGW…DASY), 801 to 839 (NLGV…EGTL), and 840 to 877 (WCSL…LGHV). S608 carries the phosphoserine modification. N-linked (GlcNAc...) asparagine glycosylation occurs at N937. A Sel1-like 8 repeat occupies 952 to 988 (KMGDLYYYGHQNQSQDLELSVQMYAQAALDGDSQGFF). Residues 1057–1077 (ILHSALIYFLGTFLLSILIAW) form a helical membrane-spanning segment. The segment at 1087-1132 (ASDPPPRPSQASPDTATSTASPAVTPAADASDQDQPTVTNNPEPRG) is disordered. Residues 1097–1116 (ASPDTATSTASPAVTPAADA) show a composition bias toward low complexity. Positions 1119–1132 (QDQPTVTNNPEPRG) are enriched in polar residues.

Its subcellular location is the membrane. The chain is Protein sel-1 homolog 3 (SEL1L3) from Homo sapiens (Human).